The following is a 556-amino-acid chain: Formate--tetrahydrofolate ligase (556 aa).

Position 65-72 (65-72 (TPAGEGKS)) interacts with ATP.

It belongs to the formate--tetrahydrofolate ligase family.

It carries out the reaction (6S)-5,6,7,8-tetrahydrofolate + formate + ATP = (6R)-10-formyltetrahydrofolate + ADP + phosphate. The protein operates within one-carbon metabolism; tetrahydrofolate interconversion. In Streptococcus pneumoniae (strain ATCC 700669 / Spain 23F-1), this protein is Formate--tetrahydrofolate ligase.